We begin with the raw amino-acid sequence, 540 residues long: Chaperonin GroEL (540 aa).

Residues 29–32 (TLGP), 86–90 (DGTTT), glycine 413, 476–478 (NAA), and aspartate 492 each bind ATP.

Belongs to the chaperonin (HSP60) family. As to quaternary structure, forms a cylinder of 14 subunits composed of two heptameric rings stacked back-to-back. Interacts with the co-chaperonin GroES.

It localises to the cytoplasm. It carries out the reaction ATP + H2O + a folded polypeptide = ADP + phosphate + an unfolded polypeptide.. In terms of biological role, together with its co-chaperonin GroES, plays an essential role in assisting protein folding. The GroEL-GroES system forms a nano-cage that allows encapsulation of the non-native substrate proteins and provides a physical environment optimized to promote and accelerate protein folding. This Geobacillus thermodenitrificans (strain NG80-2) protein is Chaperonin GroEL.